The primary structure comprises 271 residues: MSKIQTTFQRLQAQGRKALIPFITAGDPDPTLTVPLMHALVAGGADIIELGVPFSDPMADGPTIQRASERALAQGMTLRKVLQAVREFRSGDADTPVVLMGYANPIEAMGQQAFVAAAREAGVDGALVVDYPPEECVEFAAASKAAGLDPIFLLAPTSSEQRFADVARAGSGYIYYVSLKGVTGAGTLDLDEVARRIPQIRAAVGMPVGVGFGIRDAESARRIGAVADAVVIGSRIIEEIERSPREQACSNVTHFVKGIREALDTLPGVKQ.

Residues glutamate 49 and aspartate 60 each act as proton acceptor in the active site.

Belongs to the TrpA family. As to quaternary structure, tetramer of two alpha and two beta chains.

It carries out the reaction (1S,2R)-1-C-(indol-3-yl)glycerol 3-phosphate + L-serine = D-glyceraldehyde 3-phosphate + L-tryptophan + H2O. The protein operates within amino-acid biosynthesis; L-tryptophan biosynthesis; L-tryptophan from chorismate: step 5/5. In terms of biological role, the alpha subunit is responsible for the aldol cleavage of indoleglycerol phosphate to indole and glyceraldehyde 3-phosphate. This is Tryptophan synthase alpha chain from Azoarcus sp. (strain BH72).